Reading from the N-terminus, the 297-residue chain is Urease accessory protein UreD 2 (297 aa).

Belongs to the UreD family. In terms of assembly, ureD, UreF and UreG form a complex that acts as a GTP-hydrolysis-dependent molecular chaperone, activating the urease apoprotein by helping to assemble the nickel containing metallocenter of UreC. The UreE protein probably delivers the nickel.

Its subcellular location is the cytoplasm. In terms of biological role, required for maturation of urease via the functional incorporation of the urease nickel metallocenter. This is Urease accessory protein UreD 2 from Methylorubrum populi (strain ATCC BAA-705 / NCIMB 13946 / BJ001) (Methylobacterium populi).